Consider the following 179-residue polypeptide: MQVILKEDVVNLGYKDDIVTVKDGYGRNFLIPQGKAVIASESAKKVLAENLRQRAHKIAQIKKEAEEKAASMQGISLTIKAKTSSTGTIFGSVTNIQIAEELAKKGVEVDRKIIVLKPAVKEVGNYTAVVRLHKEVTVEIPFEVVSENETIIEAKPEEAPVPVAEEPTAETEQAEVAAE.

The tract at residues 155–179 is disordered; that stretch reads KPEEAPVPVAEEPTAETEQAEVAAE. Acidic residues predominate over residues 167–179; that stretch reads PTAETEQAEVAAE.

This sequence belongs to the bacterial ribosomal protein bL9 family.

In terms of biological role, binds to the 23S rRNA. This chain is Large ribosomal subunit protein bL9, found in Porphyromonas gingivalis (strain ATCC BAA-308 / W83).